Consider the following 413-residue polypeptide: Serpin A12 (413 aa).

An N-terminal signal peptide occupies residues 1 to 20 (MTRMLDLGLFLAGLLTVKGL). Residues Asn-92 and Asn-267 are each glycosylated (N-linked (GlcNAc...) asparagine). Positions 364-382 (GMEGAAGSGAQTLPMETPR) are reactive center loop.

This sequence belongs to the serpin family. As to quaternary structure, forms a stable complex with KLK7. Glycosylation slightly decreases affinity for heparin, but otherwise has no significant effect on KLK7 inhibitory activity or thermal stability of the protein. In terms of tissue distribution, expressed in visceral adipose tissues.

The protein resides in the secreted. With respect to regulation, inhibition of KLK7 is enhanced by heparin. Adipokine that modulates insulin action by specifically inhibiting its target protease KLK7 in white adipose tissues. This Mus musculus (Mouse) protein is Serpin A12 (Serpina12).